The sequence spans 133 residues: Acyl-CoA thioesterase YbgC (133 aa).

Asp-11 is a catalytic residue.

This sequence belongs to the 4-hydroxybenzoyl-CoA thioesterase family. Homotetramer. May interact with CagA.

In terms of biological role, thioesterase that may be involved in phospholipid metabolism. Displays acyl-CoA thioesterase activity with lauroyl-CoA (C12:0), myristoyl-CoA (C14:0), palmitoyl-CoA (C16:0), stearoyl-CoA (C18:0) and benzoyl-CoA, catalyzing the hydrolysis of the thioester bond. Has low activity with butyryl-CoA and octanoyl-CoA. This Helicobacter pylori (strain ATCC 700392 / 26695) (Campylobacter pylori) protein is Acyl-CoA thioesterase YbgC (ybgC).